Reading from the N-terminus, the 310-residue chain is Ribosomal RNA small subunit methyltransferase H (310 aa).

S-adenosyl-L-methionine contacts are provided by residues Gly-32–His-34, Asp-52, Ala-83, Asp-100, and Gln-107.

Belongs to the methyltransferase superfamily. RsmH family.

It localises to the cytoplasm. It catalyses the reaction cytidine(1402) in 16S rRNA + S-adenosyl-L-methionine = N(4)-methylcytidine(1402) in 16S rRNA + S-adenosyl-L-homocysteine + H(+). In terms of biological role, specifically methylates the N4 position of cytidine in position 1402 (C1402) of 16S rRNA. The protein is Ribosomal RNA small subunit methyltransferase H of Geobacillus sp. (strain WCH70).